The primary structure comprises 208 residues: Ribonuclease HII (208 aa).

One can recognise an RNase H type-2 domain in the interval 17–208 (LRVCGIDEAG…SFRLRQLGEK (192 aa)). Residues D23, E24, and D120 each contribute to the a divalent metal cation site.

The protein belongs to the RNase HII family. The cofactor is Mn(2+). Requires Mg(2+) as cofactor.

Its subcellular location is the cytoplasm. It catalyses the reaction Endonucleolytic cleavage to 5'-phosphomonoester.. In terms of biological role, endonuclease that specifically degrades the RNA of RNA-DNA hybrids. This is Ribonuclease HII from Chlorobium luteolum (strain DSM 273 / BCRC 81028 / 2530) (Pelodictyon luteolum).